We begin with the raw amino-acid sequence, 185 residues long: MVAARVSEVKAEGVLRGACAALAAAAALLVGLSTQTETVLLVRKKATVKDVQALWVLAMAAAAAAGYHLLQLLKCFYLGRRVGGGASPCRRSSRALAWTCLLLDKACAYTTFATTVAAAQACVIALDGAHALQWTKLCNIYTRFCEQIAGSLVLGMLAAVGTAVLSAASARNVFRHYSPGTYAAH.

Over 1 to 12 the chain is Cytoplasmic; the sequence is MVAARVSEVKAE. The chain crosses the membrane as a helical span at residues 13 to 33; sequence GVLRGACAALAAAAALLVGLS. Residues 34–52 lie on the Extracellular side of the membrane; sequence TQTETVLLVRKKATVKDVQ. A helical membrane pass occupies residues 53–73; that stretch reads ALWVLAMAAAAAAGYHLLQLL. The Cytoplasmic segment spans residues 74-105; it reads KCFYLGRRVGGGASPCRRSSRALAWTCLLLDK. The chain crosses the membrane as a helical span at residues 106 to 126; the sequence is ACAYTTFATTVAAAQACVIAL. Topologically, residues 127–147 are extracellular; that stretch reads DGAHALQWTKLCNIYTRFCEQ. A helical transmembrane segment spans residues 148–168; the sequence is IAGSLVLGMLAAVGTAVLSAA. The Cytoplasmic portion of the chain corresponds to 169-185; sequence SARNVFRHYSPGTYAAH.

It belongs to the Casparian strip membrane proteins (CASP) family. In terms of assembly, homodimer and heterodimers.

It is found in the cell membrane. In Sorghum bicolor (Sorghum), this protein is CASP-like protein 2C1.